The following is a 2849-amino-acid chain: Polycystin-1-like protein 1 (2849 aa).

Over 1 to 1748 (MAEEAAQNIS…SDISKLQSHP (1748 aa)) the chain is Extracellular. N-linked (GlcNAc...) asparagine glycosylation is found at Asn8, Asn295, Asn338, Asn376, Asn447, Asn482, Asn514, Asn605, Asn657, Asn751, Asn875, Asn926, and Asn937. 2 PKD domains span residues 508-590 (SVSV…VQKK) and 592-673 (VANR…VCEP). In terms of domain architecture, REJ spans 674-1571 (CQPPLVKNMG…GEEDGLDNRR (898 aa)). Over residues 970 to 987 (NLLPTEPGTADPDATTTP) the composition is skewed to low complexity. 2 disordered regions span residues 970–1068 (NLLP…PHLS) and 1081–1118 (IPSGGRQPAKDTSFPGSGPSLSAEESPGDGDNLVDPSL). Residues 1053-1068 (RSERSQPTHSPDPHLS) are compositionally biased toward basic and acidic residues. N-linked (GlcNAc...) asparagine glycans are attached at residues Asn1233, Asn1301, Asn1306, Asn1572, Asn1681, and Asn1716. One can recognise a GAIN-B domain in the interval 1587–1735 (QFTELSENPQ…ALLRRKLKAS (149 aa)). An intrachain disulfide couples Cys1691 to Cys1717. The interval 1691–1735 (CLFWDKREWKSERFSPQPGTSPEKVNCSYHRLAAFALLRRKLKAS) is GPS. The chain crosses the membrane as a helical span at residues 1749–1769 (ENLLPSIFIMGSVILYGFLVA). The Cytoplasmic portion of the chain corresponds to 1770-1956 (KSRQVDHHEK…SSSRYLHTPR (187 aa)). The PLAT domain occupies 1796–1913 (QLYAVVIDTG…HDGRVERELT (118 aa)). Residues 1957 to 1977 (LTVSFSLLCVYACLTALVAAG) traverse the membrane as a helical segment. Topologically, residues 1978–1992 (GQEQPHLDVSPTLGS) are extracellular. A helical transmembrane segment spans residues 1993–2013 (FRVGLLCTLLASPGAQLLSLL). The Cytoplasmic portion of the chain corresponds to 2014-2135 (FRLSKEAPGS…SRALQPWWSS (122 aa)). A disordered region spans residues 2023-2089 (SARVEPHSPL…GTACPAPKLQ (67 aa)). A helical transmembrane segment spans residues 2136–2156 (AVWAICGTASLACSLGTGFLA). Residues 2157–2174 (YRFGQEQCVQWLHLLSLS) lie on the Extracellular side of the membrane. A helical transmembrane segment spans residues 2175-2195 (VVCCIFITQPLMVCLMALGFA). At 2196–2281 (WKRRADNHFF…QRMRRESRTR (86 aa)) the chain is on the cytoplasmic side. A helical transmembrane segment spans residues 2282–2302 (AALRDISMDILMLLLLLCVIY). At 2303 to 2522 (GRFSQDEYSL…FRSDSALQYH (220 aa)) the chain is on the extracellular side. Asn2426 carries an N-linked (GlcNAc...) asparagine glycan. The chain crosses the membrane as a helical span at residues 2523-2543 (LMLPQLVFLALSLIHLCVQLY). Residues 2544–2562 (RMMDKGVLSYWRKPRNWLE) are Cytoplasmic-facing. A helical membrane pass occupies residues 2563–2583 (LSVVGVSLTYYAVSGHLVTLA). Residues 2584 to 2616 (GDVTNQFHRGLCRAFMDLTLMASWNQRARWLRG) are Extracellular-facing. A helical transmembrane segment spans residues 2617-2637 (ILLFLFTLKCVYLPGIQNTMA). Topologically, residues 2638-2646 (SCSSMMRHS) are cytoplasmic. A helical transmembrane segment spans residues 2647–2667 (LPSIFVAGLVGALMLAALSHL). Topologically, residues 2668 to 2711 (HRFLLSMWVLPPGTFTDAFPGLLFHFPRRSQKDCLLGLSKSDQR) are extracellular. The chain crosses the membrane as a helical span at residues 2712–2732 (AMACYFGILLIVSATLCFGML). Residues 2733-2849 (RGFLMTLPQK…AAEPADIKDF (117 aa)) lie on the Cytoplasmic side of the membrane.

It belongs to the polycystin family. Heterodimer. Interacts with PKD2 to form a calcium channel. Interacts with PKD2L1; to form ciliary calcium channel. May interact with GNA12, GNAS, GNAI1 and GNAI2. In terms of tissue distribution, detected in testis and in fetal and adult heart.

It is found in the cell projection. Its subcellular location is the cilium membrane. Its function is as follows. Component of a calcium-permeant ion channel formed by PKD1L2 and PKD1L1 in primary cilia, where it controls cilium calcium concentration, without affecting cytoplasmic calcium concentration, and regulates sonic hedgehog/SHH signaling and GLI2 transcription. The PKD1L1:PKD2L1 channel complex is mechanosensitive only at high pressures and is highly temperature sensitive. Also involved in left/right axis specification downstream of nodal flow by forming a complex with PKD2 in cilia to facilitate flow detection in left/right patterning. May function as a G-protein-coupled receptor. The protein is Polycystin-1-like protein 1 of Homo sapiens (Human).